The chain runs to 537 residues: CTP synthase (537 aa).

The segment at 1 to 265 is amidoligase domain; the sequence is MTKFIFVTGG…GKYLVKRLGL (265 aa). Ser-13 is a binding site for CTP. Residue Ser-13 coordinates UTP. ATP is bound at residue 14–19; that stretch reads GLGKGI. Position 54 (Tyr-54) interacts with L-glutamine. Asp-71 lines the ATP pocket. Residues Asp-71 and Glu-139 each coordinate Mg(2+). CTP contacts are provided by residues 146–148, 186–191, and Lys-222; these read DIE and KTKPTQ. Residues 186–191 and Lys-222 contribute to the UTP site; that span reads KTKPTQ. The Glutamine amidotransferase type-1 domain maps to 290-532; the sequence is EIAIVGKYVK…VKAAKEYKQE (243 aa). An L-glutamine-binding site is contributed by Gly-351. The Nucleophile; for glutamine hydrolysis role is filled by Cys-378. Residues 379–382, Glu-402, and Arg-459 contribute to the L-glutamine site; that span reads FGFQ. Catalysis depends on residues His-505 and Glu-507.

Belongs to the CTP synthase family. As to quaternary structure, homotetramer.

The catalysed reaction is UTP + L-glutamine + ATP + H2O = CTP + L-glutamate + ADP + phosphate + 2 H(+). The enzyme catalyses L-glutamine + H2O = L-glutamate + NH4(+). It carries out the reaction UTP + NH4(+) + ATP = CTP + ADP + phosphate + 2 H(+). It functions in the pathway pyrimidine metabolism; CTP biosynthesis via de novo pathway; CTP from UDP: step 2/2. Allosterically activated by GTP, when glutamine is the substrate; GTP has no effect on the reaction when ammonia is the substrate. The allosteric effector GTP functions by stabilizing the protein conformation that binds the tetrahedral intermediate(s) formed during glutamine hydrolysis. Inhibited by the product CTP, via allosteric rather than competitive inhibition. Its function is as follows. Catalyzes the ATP-dependent amination of UTP to CTP with either L-glutamine or ammonia as the source of nitrogen. Regulates intracellular CTP levels through interactions with the four ribonucleotide triphosphates. The sequence is that of CTP synthase from Pyrococcus abyssi (strain GE5 / Orsay).